Here is a 458-residue protein sequence, read N- to C-terminus: Phosphoglucosamine mutase (458 aa).

Ser106 acts as the Phosphoserine intermediate in catalysis. Mg(2+) contacts are provided by Ser106, Asp247, Asp249, and Asp251. Residue Ser106 is modified to Phosphoserine.

The protein belongs to the phosphohexose mutase family. Mg(2+) serves as cofactor. Post-translationally, activated by phosphorylation.

The enzyme catalyses alpha-D-glucosamine 1-phosphate = D-glucosamine 6-phosphate. In terms of biological role, catalyzes the conversion of glucosamine-6-phosphate to glucosamine-1-phosphate. This is Phosphoglucosamine mutase from Chlamydia pneumoniae (Chlamydophila pneumoniae).